A 265-amino-acid chain; its full sequence is tRNA pseudouridine synthase A (265 aa).

Aspartate 53 serves as the catalytic Nucleophile. Tyrosine 111 is a binding site for substrate.

This sequence belongs to the tRNA pseudouridine synthase TruA family. As to quaternary structure, homodimer.

The catalysed reaction is uridine(38/39/40) in tRNA = pseudouridine(38/39/40) in tRNA. In terms of biological role, formation of pseudouridine at positions 38, 39 and 40 in the anticodon stem and loop of transfer RNAs. The protein is tRNA pseudouridine synthase A of Acinetobacter baumannii (strain ACICU).